Here is a 413-residue protein sequence, read N- to C-terminus: S-adenosylmethionine synthase (413 aa).

ATP is bound at residue His-15. Position 17 (Asp-17) interacts with Mg(2+). Glu-43 lines the K(+) pocket. The L-methionine site is built by Glu-56 and Gln-100. Positions 100 to 110 are flexible loop; sequence QSPDISQGVNE. ATP contacts are provided by residues 171 to 173, 248 to 249, Asp-257, 263 to 264, Ala-280, and Lys-284; these read DGK, KF, and RK. Asp-257 contacts L-methionine. Lys-288 contributes to the L-methionine binding site.

This sequence belongs to the AdoMet synthase family. In terms of assembly, homotetramer; dimer of dimers. Requires Mg(2+) as cofactor. K(+) serves as cofactor.

The protein resides in the cytoplasm. The catalysed reaction is L-methionine + ATP + H2O = S-adenosyl-L-methionine + phosphate + diphosphate. Its pathway is amino-acid biosynthesis; S-adenosyl-L-methionine biosynthesis; S-adenosyl-L-methionine from L-methionine: step 1/1. Functionally, catalyzes the formation of S-adenosylmethionine (AdoMet) from methionine and ATP. The overall synthetic reaction is composed of two sequential steps, AdoMet formation and the subsequent tripolyphosphate hydrolysis which occurs prior to release of AdoMet from the enzyme. The sequence is that of S-adenosylmethionine synthase from Prochlorococcus marinus (strain MIT 9215).